The sequence spans 248 residues: Ribonuclease 3 (248 aa).

The RNase III domain maps to 15–142; the sequence is LKAFFKQYHV…MIAALYLDLG (128 aa). Position 55 (Glu55) interacts with Mg(2+). The active site involves Asp59. Positions 128 and 131 each coordinate Mg(2+). The active site involves Glu131. A DRBM domain is found at 169–240; it reads DYKTELQEFL…ARDALQKLAT (72 aa).

This sequence belongs to the ribonuclease III family. As to quaternary structure, homodimer. It depends on Mg(2+) as a cofactor.

It is found in the cytoplasm. The catalysed reaction is Endonucleolytic cleavage to 5'-phosphomonoester.. Its function is as follows. Digests double-stranded RNA. Involved in the processing of primary rRNA transcript to yield the immediate precursors to the large and small rRNAs (23S and 16S). Processes some mRNAs, and tRNAs when they are encoded in the rRNA operon. Processes pre-crRNA and tracrRNA of type II CRISPR loci if present in the organism. In Spiroplasma citri, this protein is Ribonuclease 3.